Consider the following 82-residue polypeptide: Small ribosomal subunit protein bS16 (82 aa).

This sequence belongs to the bacterial ribosomal protein bS16 family.

The protein is Small ribosomal subunit protein bS16 of Yersinia pseudotuberculosis serotype O:1b (strain IP 31758).